The chain runs to 427 residues: Glutamate-1-semialdehyde 2,1-aminomutase (427 aa).

Lys-265 is modified (N6-(pyridoxal phosphate)lysine).

The protein belongs to the class-III pyridoxal-phosphate-dependent aminotransferase family. HemL subfamily. As to quaternary structure, homodimer. The cofactor is pyridoxal 5'-phosphate.

Its subcellular location is the cytoplasm. It carries out the reaction (S)-4-amino-5-oxopentanoate = 5-aminolevulinate. It participates in porphyrin-containing compound metabolism; protoporphyrin-IX biosynthesis; 5-aminolevulinate from L-glutamyl-tRNA(Glu): step 2/2. The polypeptide is Glutamate-1-semialdehyde 2,1-aminomutase (Burkholderia multivorans (strain ATCC 17616 / 249)).